A 421-amino-acid chain; its full sequence is uncharacterized protein (421 aa).

2 coiled-coil regions span residues 126-182 (YART…IQKI) and 328-397 (YQVE…RLTL).

This is an uncharacterized protein from Treponema pallidum (strain Nichols).